Consider the following 319-residue polypeptide: Acetyl-coenzyme A carboxylase carboxyl transferase subunit alpha (319 aa).

Residues 32 to 293 (NVETEVRALR…KAVLLNELDA (262 aa)) form the CoA carboxyltransferase C-terminal domain.

The protein belongs to the AccA family. In terms of assembly, acetyl-CoA carboxylase is a heterohexamer composed of biotin carboxyl carrier protein (AccB), biotin carboxylase (AccC) and two subunits each of ACCase subunit alpha (AccA) and ACCase subunit beta (AccD).

It is found in the cytoplasm. It catalyses the reaction N(6)-carboxybiotinyl-L-lysyl-[protein] + acetyl-CoA = N(6)-biotinyl-L-lysyl-[protein] + malonyl-CoA. It participates in lipid metabolism; malonyl-CoA biosynthesis; malonyl-CoA from acetyl-CoA: step 1/1. Component of the acetyl coenzyme A carboxylase (ACC) complex. First, biotin carboxylase catalyzes the carboxylation of biotin on its carrier protein (BCCP) and then the CO(2) group is transferred by the carboxyltransferase to acetyl-CoA to form malonyl-CoA. In Xanthomonas axonopodis pv. citri (strain 306), this protein is Acetyl-coenzyme A carboxylase carboxyl transferase subunit alpha.